Consider the following 87-residue polypeptide: Apolipoprotein C-I (87 aa).

The signal sequence occupies residues 1–26 (MRLFLSLPVLVVVLAMVLEGPAPAQA).

The protein belongs to the apolipoprotein C1 family.

Its subcellular location is the secreted. In terms of biological role, inhibitor of lipoprotein binding to the low density lipoprotein (LDL) receptor, LDL receptor-related protein, and very low density lipoprotein (VLDL) receptor. Associates with high density lipoproteins (HDL) and the triacylglycerol-rich lipoproteins in the plasma and makes up about 10% of the protein of the VLDL and 2% of that of HDL. Appears to interfere directly with fatty acid uptake and is also the major plasma inhibitor of cholesteryl ester transfer protein (CETP). Binds free fatty acids and reduces their intracellular esterification. Modulates the interaction of APOE with beta-migrating VLDL and inhibits binding of beta-VLDL to the LDL receptor-related protein. The protein is Apolipoprotein C-I (APOC1) of Zalophus californianus (California sealion).